A 195-amino-acid chain; its full sequence is L-rhamnose-binding lectin CSL2 (195 aa).

SUEL-type lectin domains follow at residues 1–97 (TRVV…YTCL) and 104–195 (TCEG…YTCG).

Functionally, L-rhamnose binding lectin. Has hemagglutinating activity towards rabbit erythrocytes and human type B erythrocytes. Hemagglutinating activity is inhibited by smooth-type lipopolysaccharide (LPS) from S.flexneri 1A and E.coli K12, but not by rough-type LPS from S.flexneri, E.coli K12 and E.coli EH100. Agglutinates E.coli K12 and B.subtilis. The polypeptide is L-rhamnose-binding lectin CSL2 (Oncorhynchus keta (Chum salmon)).